A 588-amino-acid polypeptide reads, in one-letter code: Cyclomaltodextrinase (588 aa).

Substrate-binding residues include H247 and R326. Catalysis depends on D328, which acts as the Nucleophile. E357 acts as the Proton donor in catalysis. Residues 423-424 (HD), D468, and R472 each bind substrate.

It belongs to the glycosyl hydrolase 13 family. As to quaternary structure, exists as a monomer or a homodimer in solution. Homodimer is more active and stable than the monomer.

It catalyses the reaction cyclomaltodextrin + H2O = linear maltodextrin. No metal dependence, but Mn(2+) increases the activity with alpha-cyclodextrin as substrate. No effect on the activity with presence or absence of Ca(2+), Zn(2+), Tween-20 or EDTA. Hydrolyzes alpha-, beta- and gamma-cyclodextrins with the highest activity with alpha-cyclodextrin (cyclomaltohexaose). Pullulan is the preferred substrate from linear substrates. Maltose is a major product of these reactions. Is also able to hydrolyze maltotriose and acarbose, and transglycosylate their hydrolytic products. Major reaction products of maltotriose and of acarbose are maltose and glucose, and glucose and pseudotrisaccharide, respectively. No activity with glucose or maltose as substrate. This is Cyclomaltodextrinase from Geobacillus thermopakistaniensis (strain MAS1).